Consider the following 154-residue polypeptide: MRIIGIDPGLARVGYGIIDEIEGKKIMIDCGIIETKSTKKEEERLVEISNDLSSIIKKWNPNSAAVEKFFFYRSSTTISVVQARGVIMMTLGKYKLPIQEFPPMQIKLAVTGYGHSDKNEVLNCVMHELSITSPPKPDDAADALAIALTGIYLK.

Residues aspartate 7, glutamate 67, and aspartate 139 contribute to the active site. 3 residues coordinate Mg(2+): aspartate 7, glutamate 67, and aspartate 139.

This sequence belongs to the RuvC family. In terms of assembly, homodimer which binds Holliday junction (HJ) DNA. The HJ becomes 2-fold symmetrical on binding to RuvC with unstacked arms; it has a different conformation from HJ DNA in complex with RuvA. In the full resolvosome a probable DNA-RuvA(4)-RuvB(12)-RuvC(2) complex forms which resolves the HJ. Mg(2+) is required as a cofactor.

The protein resides in the cytoplasm. The catalysed reaction is Endonucleolytic cleavage at a junction such as a reciprocal single-stranded crossover between two homologous DNA duplexes (Holliday junction).. The RuvA-RuvB-RuvC complex processes Holliday junction (HJ) DNA during genetic recombination and DNA repair. Endonuclease that resolves HJ intermediates. Cleaves cruciform DNA by making single-stranded nicks across the HJ at symmetrical positions within the homologous arms, yielding a 5'-phosphate and a 3'-hydroxyl group; requires a central core of homology in the junction. The consensus cleavage sequence is 5'-(A/T)TT(C/G)-3'. Cleavage occurs on the 3'-side of the TT dinucleotide at the point of strand exchange. HJ branch migration catalyzed by RuvA-RuvB allows RuvC to scan DNA until it finds its consensus sequence, where it cleaves and resolves the cruciform DNA. The chain is Crossover junction endodeoxyribonuclease RuvC from Prochlorococcus marinus (strain NATL1A).